Consider the following 441-residue polypeptide: 3-phosphoshikimate 1-carboxyvinyltransferase (441 aa).

The disordered stretch occupies residues 1-21 (MSANGPSHPARELKAGGSLSG). 3-phosphoshikimate is bound by residues Lys29, Ser30, and Arg34. A phosphoenolpyruvate-binding site is contributed by Lys29. Phosphoenolpyruvate-binding residues include Gly103 and Arg132. Residues Ser177, Gln179, Asp328, and Lys355 each coordinate 3-phosphoshikimate. Gln179 is a binding site for phosphoenolpyruvate. Asp328 serves as the catalytic Proton acceptor. Phosphoenolpyruvate-binding residues include Arg359 and Arg401.

This sequence belongs to the EPSP synthase family. Monomer.

It is found in the cytoplasm. It catalyses the reaction 3-phosphoshikimate + phosphoenolpyruvate = 5-O-(1-carboxyvinyl)-3-phosphoshikimate + phosphate. The protein operates within metabolic intermediate biosynthesis; chorismate biosynthesis; chorismate from D-erythrose 4-phosphate and phosphoenolpyruvate: step 6/7. Functionally, catalyzes the transfer of the enolpyruvyl moiety of phosphoenolpyruvate (PEP) to the 5-hydroxyl of shikimate-3-phosphate (S3P) to produce enolpyruvyl shikimate-3-phosphate and inorganic phosphate. This Parasynechococcus marenigrum (strain WH8102) protein is 3-phosphoshikimate 1-carboxyvinyltransferase.